A 515-amino-acid polypeptide reads, in one-letter code: MAARAGFQSVAPSGGAGASGGAGVAAALGPGGTPGPPVRMGPAPGQGLYRSPMPGAAYPRPGMLPGSRMTPQGPSMGPPGYGGNPSVRPGLAQSGMDQSRKRPAPQQIQQVQQQAVQNRNHNAKKKKMADKILPQRIRELVPESQAYMDLLAFERKLDQTIMRKRLDIQEALKRPIKQKRKLRIFISNTFNPAKSDAEDGEGTVASWELRVEGRLLEDAALSKYDATKQKRKFSSFFKSLVIELDKDLYGPDNHLVEWHRTATTQETDGFQVKRPGDVNVRCTVLLMLDYQPPQFKLDPRLARLLGIHTQTRPVIIQALWQYIKTHKLQDPHEREFVLCDKYLQQIFESQRMKFSEIPQRLHALLMPPEPIIINHVISVDPNDQKKTACYDIDVEVDDTLKTQMNSFLLSTASQQEIATLDNKIHETIETINQLKTQREFMLSFARDPQGFINDWLQSQCRDLKTMTDVVGNPEEERRAEFYFQPWAQEAVCRYFYSKVQQRRQELEQALGIRNT.

Positions methionine 1–methionine 128 are disordered. A compositionally biased stretch (gly residues) spans glycine 14–glycine 23. Positions alanine 43–aspartate 167 are interaction with ESR1, NR1H4, NR3C1, PGR and SMARCA4. Residues arginine 68 and arginine 88 each carry the asymmetric dimethylarginine modification. Residue lysine 101 forms a Glycyl lysine isopeptide (Lys-Gly) (interchain with G-Cter in SUMO2) linkage. A compositionally biased stretch (low complexity) spans alanine 104–glutamine 117. Positions isoleucine 168 to glutamate 474 are interaction with SMARCC1 and SMARCC2. Positions arginine 180–threonine 515 are necessary for GR/NR3C1-mediated remodeling and transcription from chromatin; required for GR/NR3C1 interaction with the BRG1/SMARCA4 complex in vivo. Phosphothreonine is present on threonine 203. Residue lysine 223 is modified to N6-acetyllysine. One can recognise an SWIB/MDM2 domain in the interval tyrosine 290–proline 367. Positions alanine 412–phenylalanine 440 form a coiled coil.

The protein belongs to the SMARCD family. Component of the multiprotein chromatin-remodeling complexes SWI/SNF: SWI/SNF-A (BAF), SWI/SNF-B (PBAF) and related complexes. The canonical complex contains a catalytic subunit (either SMARCA4/BRG1/BAF190A or SMARCA2/BRM/BAF190B), and at least SMARCE1, ACTL6A/BAF53, SMARCC1/BAF155, SMARCC2/BAF170, and SMARCB1/SNF5/BAF47. Other subunits specific to each of the complexes may also be present permitting several possible combinations developmentally and tissue specific. Component of the BAF complex, which includes at least actin (ACTB), ARID1A/BAF250A, ARID1B/BAF250B, SMARCA2/BRM, SMARCA4/BRG1/BAF190A, ACTL6A/BAF53, ACTL6B/BAF53B, SMARCE1/BAF57, SMARCC1/BAF155, SMARCC2/BAF170, SMARCB1/SNF5/INI1, and one or more SMARCD1/BAF60A, SMARCD2/BAF60B, or SMARCD3/BAF60C. In muscle cells, the BAF complex also contains DPF3. Component of neural progenitors-specific chromatin remodeling complex (npBAF complex) composed of at least, ARID1A/BAF250A or ARID1B/BAF250B, SMARCD1/BAF60A, SMARCD3/BAF60C, SMARCA2/BRM/BAF190B, SMARCA4/BRG1/BAF190A, SMARCB1/BAF47, SMARCC1/BAF155, SMARCE1/BAF57, SMARCC2/BAF170, PHF10/BAF45A, ACTL6A/BAF53A and actin. Component of neuron-specific chromatin remodeling complex (nBAF complex) composed of at least, ARID1A/BAF250A or ARID1B/BAF250B, SMARCD1/BAF60A, SMARCD3/BAF60C, SMARCA2/BRM/BAF190B, SMARCA4/BRG1/BAF190A, SMARCB1/BAF47, SMARCC1/BAF155, SMARCE1/BAF57, SMARCC2/BAF170, DPF1/BAF45B, DPF3/BAF45C, ACTL6B/BAF53B and actin. Component of the SWI/SNF-B (PBAF) chromatin remodeling complex, at least composed of SMARCA4/BRG1, SMARCB1/BAF47/SNF5, ACTL6A/BAF53A or ACTL6B/BAF53B, SMARCE1/BAF57, SMARCD1/BAF60A, SMARCD2/BAF60B, perhaps SMARCD3/BAF60C, SMARCC1/BAF155, SMARCC2/BAF170, PBRM1/BAF180, ARID2/BAF200 and actin (ACTB). Component of SWI/SNF (GBAF) subcomplex, which includes at least BICRA or BICRAL (mutually exclusive), BRD9, SS18, SMARCA2/BRM, SMARCA4/BRG1/BAF190A, ACTL6A/BAF53, SMARCC1/BAF155, and SMARCD1/BAF60A. Specifically interacts with the VDR heterodimer complex. Interacts with ESR1, NR3C1, NR1H4, PGR, SMARCA4, SMARCC1 and SMARCC2. Interacts with DPF2. Interacts with DPF3a (isoform 2 of DPF3/BAF45C) and with HDGFL2 in a DPF3a-dependent manner. Interacts with FOS, FOSB isoform 1 and 2, FOSL1 and FOSL2. Interacts with AKIRIN2. In terms of tissue distribution, ubiquitous.

It localises to the nucleus. In terms of biological role, involved in transcriptional activation and repression of select genes by chromatin remodeling (alteration of DNA-nucleosome topology). Component of SWI/SNF chromatin remodeling complexes that carry out key enzymatic activities, changing chromatin structure by altering DNA-histone contacts within a nucleosome in an ATP-dependent manner. Belongs to the neural progenitors-specific chromatin remodeling complex (npBAF complex) and the neuron-specific chromatin remodeling complex (nBAF complex). During neural development a switch from a stem/progenitor to a postmitotic chromatin remodeling mechanism occurs as neurons exit the cell cycle and become committed to their adult state. The transition from proliferating neural stem/progenitor cells to postmitotic neurons requires a switch in subunit composition of the npBAF and nBAF complexes. As neural progenitors exit mitosis and differentiate into neurons, npBAF complexes which contain ACTL6A/BAF53A and PHF10/BAF45A, are exchanged for homologous alternative ACTL6B/BAF53B and DPF1/BAF45B or DPF3/BAF45C subunits in neuron-specific complexes (nBAF). The npBAF complex is essential for the self-renewal/proliferative capacity of the multipotent neural stem cells. The nBAF complex along with CREST plays a role regulating the activity of genes essential for dendrite growth. Has a strong influence on vitamin D-mediated transcriptional activity from an enhancer vitamin D receptor element (VDRE). May be a link between mammalian SWI-SNF-like chromatin remodeling complexes and the vitamin D receptor (VDR) heterodimer. Mediates critical interactions between nuclear receptors and the BRG1/SMARCA4 chromatin-remodeling complex for transactivation. The chain is SWI/SNF-related matrix-associated actin-dependent regulator of chromatin subfamily D member 1 (Smarcd1) from Mus musculus (Mouse).